Consider the following 725-residue polypeptide: Ribonucleoside-diphosphate reductase subunit alpha (725 aa).

Substrate contacts are provided by residues Thr-172, 188 to 189, Gly-217, 397 to 401, and 599 to 603; these read SC, NLCSE, and PTGSI. A disulfide bridge links Cys-189 with Cys-426. Residue Asn-397 is the Proton acceptor of the active site. Cys-399 (cysteine radical intermediate) is an active-site residue. The Proton acceptor role is filled by Glu-401.

It belongs to the ribonucleoside diphosphate reductase large chain family. Tetramer of two alpha and two beta subunits. Co-immunoprecipitates with DarG in the presence and absence of darT.

The catalysed reaction is a 2'-deoxyribonucleoside 5'-diphosphate + [thioredoxin]-disulfide + H2O = a ribonucleoside 5'-diphosphate + [thioredoxin]-dithiol. With respect to regulation, under complex allosteric control mediated by deoxynucleoside triphosphates and ATP binding. The type of nucleotide bound at the specificity site determines substrate preference. It seems probable that ATP makes the enzyme reduce CDP and UDP, dGTP favors ADP reduction and dTTP favors GDP reduction. CDP reduction is stimulated by dATP. In terms of biological role, provides the precursors necessary for DNA synthesis. Catalyzes the biosynthesis of deoxyribonucleotides from the corresponding ribonucleotides. When coexpressed in E.coli with nrdF2 the 2 proteins complement a temperature-sensitive E.coli mutant, however coexpression with nrdF1 does not complement. This Mycobacterium tuberculosis (strain ATCC 25618 / H37Rv) protein is Ribonucleoside-diphosphate reductase subunit alpha (nrdE).